The sequence spans 482 residues: Mannan endo-1,4-beta-mannosidase (482 aa).

An N-terminal signal peptide occupies residues 1–21 (MARTLRYLLCGILALAAGSNA). Positions 42–160 (TTYEAEDAIL…WYLVDSITLT (119 aa)) constitute a CBM6 domain. 2 N-linked (GlcNAc...) asparagine glycosylation sites follow: Asn171 and Asn300. The region spanning 181–474 (ASARALYDYL…YTSDYVLTLD (294 aa)) is the GH26 domain. The Proton donor role is filled by Glu332. Glu422 (nucleophile) is an active-site residue.

Belongs to the glycosyl hydrolase 26 family.

The protein localises to the secreted. With respect to regulation, the activity is completely impaired by Ag(+), partially inhibited by Zn(2+), and enhanced by Co(2+), Ni(2+) and Cu(2+) by 22.6, 14.5 and 20.8 %, respectively. Ca(2+), Na(+), Mg(2+), Mn(2+), urea and EDTA do not significantly affect the mannanase activity. Mannan endo-1,4-beta-mannosidase that exhibits high activity against konjac glucomannan and carob galactomannan, as well as a lower activity toward beta-mannan. Shows no activity against barley beta-glucan, birchwood xylan, and low viscosity carboxymethyl cellulose (CMC). Has the ability to hydrolyze manno-oligosaccharides such as M4 which is degraded slightly to M3 and M1, M5 which is mainly degraded to M4 and M1, and M6 which is mostly hydrolyzed to M4 and M2. Shows no activity toward M2 and M3 manno-oligosaccharides. The sequence is that of Mannan endo-1,4-beta-mannosidase from Thermothelomyces thermophilus (strain ATCC 42464 / BCRC 31852 / DSM 1799) (Sporotrichum thermophile).